Here is a 285-residue protein sequence, read N- to C-terminus: MIPWVLLACALPCAADPLLGAFARRDFRKGSPQLVCSLPGPQGPPGPPGAPGPSGMMGRMGFPGKDGQDGHDGDRGDSGEEGPPGRTGNRGKPGPKGKAGAIGRAGPRGPKGVNGTPGKHGTPGKKGPKGKKGEPGLPGPCSCGSGHTKSAFSVAVTKSYPRERLPIKFDKILMNEGGHYNASSGKFVCGVPGIYYFTYDITLANKHLAIGLVHNGQYRIRTFDANTGNHDVASGSTILALKQGDEVWLQIFYSEQNGLFYDPYWTDSLFTGFLIYADQDDPNEV.

An N-terminal signal peptide occupies residues 1-15 (MIPWVLLACALPCAA). Positions 33 to 144 (QLVCSLPGPQ…PGLPGPCSCG (112 aa)) are disordered. In terms of domain architecture, Collagen-like spans 40–141 (GPQGPPGPPG…KGEPGLPGPC (102 aa)). A compositionally biased stretch (pro residues) spans 41–51 (PQGPPGPPGAP). A compositionally biased stretch (low complexity) spans 53–65 (PSGMMGRMGFPGK). Basic and acidic residues predominate over residues 66–78 (DGQDGHDGDRGDS). Positions 84-120 (PGRTGNRGKPGPKGKAGAIGRAGPRGPKGVNGTPGKH) are enriched in low complexity. The 137-residue stretch at 145–281 (SGHTKSAFSV…GFLIYADQDD (137 aa)) folds into the C1q domain.

As to quaternary structure, may interact with ERFE. As to expression, expressed in adipose tissue.

The protein resides in the secreted. In terms of biological role, involved in the regulation of lipid metabolism in adipose tissue and liver. This Homo sapiens (Human) protein is Complement C1q tumor necrosis factor-related protein 2 (C1QTNF2).